Reading from the N-terminus, the 110-residue chain is UPF0060 membrane protein Pmen_1247 (110 aa).

Transmembrane regions (helical) follow at residues 5–25 (LWFLLAAVFEIAGCYAFWMWL), 31–51 (AWWIAPGLLSLVLFALILTRV), 59–79 (AYAAYGGVYIVASLAWLALIE), and 84–104 (MLSDWLGAALCLAGAAIILFA).

Belongs to the UPF0060 family.

It is found in the cell inner membrane. This is UPF0060 membrane protein Pmen_1247 from Ectopseudomonas mendocina (strain ymp) (Pseudomonas mendocina).